A 304-amino-acid chain; its full sequence is uncharacterized protein (304 aa).

It belongs to the histone deacetylase family.

Functionally, putative deacetylase. This is an uncharacterized protein from Synechocystis sp. (strain ATCC 27184 / PCC 6803 / Kazusa).